Here is a 390-residue protein sequence, read N- to C-terminus: (S)-8-oxocitronellyl enol synthase CYC2 (390 aa).

NADP(+) is bound by residues Thr-35 to Ile-37, Arg-63 to Arg-64, Asp-81 to Ile-82, Thr-105 to Trp-106, and Gln-143. Residues Lys-147 and Tyr-179 contribute to the active site. Lys-147 and Tyr-179 together coordinate substrate. NADP(+)-binding positions include Tyr-179 and Ser-213 to Met-215.

Belongs to the short-chain dehydrogenases/reductases (SDR) family. Highly divergent.

It carries out the reaction (S)-8-oxocitronellyl enol + NADP(+) = (6E)-8-oxogeranial + NADPH + H(+). The catalysed reaction is (S)-8-oxocitronellyl enol + NAD(+) = (6E)-8-oxogeranial + NADH + H(+). Functionally, iridoid synthase that catalyzes the first step in generation of the iridoid ring scaffold using the linear monoterpene (6E)-8-oxogeranial as substrate. Iridoids comprise a large family of distinctive bicyclic monoterpenes that possess a wide range of pharmacological activities, including anticancer, anti-inflammatory, antifungal and antibacterial activities. The protein is (S)-8-oxocitronellyl enol synthase CYC2 of Camptotheca acuminata (Happy tree).